The chain runs to 151 residues: Small ribosomal subunit protein uS15 (151 aa).

The segment at 1-20 (MARLHSGKRGSSGSTRPLRT) is disordered.

The protein belongs to the universal ribosomal protein uS15 family. In terms of assembly, part of the 30S ribosomal subunit.

The chain is Small ribosomal subunit protein uS15 from Methanococcus maripaludis (strain C7 / ATCC BAA-1331).